A 120-amino-acid polypeptide reads, in one-letter code: Phosphoribosyl-ATP pyrophosphatase (120 aa).

The protein belongs to the PRA-PH family.

It is found in the cytoplasm. The enzyme catalyses 1-(5-phospho-beta-D-ribosyl)-ATP + H2O = 1-(5-phospho-beta-D-ribosyl)-5'-AMP + diphosphate + H(+). It functions in the pathway amino-acid biosynthesis; L-histidine biosynthesis; L-histidine from 5-phospho-alpha-D-ribose 1-diphosphate: step 2/9. This chain is Phosphoribosyl-ATP pyrophosphatase, found in Methylibium petroleiphilum (strain ATCC BAA-1232 / LMG 22953 / PM1).